We begin with the raw amino-acid sequence, 444 residues long: Cell wall mannoprotein PST1 (444 aa).

The signal sequence occupies residues 1 to 19 (MQLHSLIASTALLITSALA). Residues Asn57, Asn76, Asn83, Asn86, Asn196, Asn210, Asn228, Asn235, Asn242, Asn263, Asn268, Asn280, Asn292, Asn305, and Asn329 are each glycosylated (N-linked (GlcNAc...) asparagine). Low complexity-rich tracts occupy residues 359-381 (SVKL…SKSS) and 395-417 (KAAA…KSSK). The segment at 359–418 (SVKLSSTSKSQSSQTTAKVSKSSSKAEEKKFTSGDIKAAASASSVSSSSASSSSSKSSKG) is disordered. Asn419 carries the GPI-anchor amidated asparagine lipid modification. The propeptide at 420–444 (AAIMAPIGQTTPLVGLLTAIIMSIM) is removed in mature form.

This sequence belongs to the SPS2 family. In terms of processing, extensively N- and O-mannosylated.

The protein localises to the cell membrane. The protein resides in the secreted. It is found in the cell wall. Its function is as follows. Has a partially redundant function to ECM33 in cell wall integrity. May be involved in a repair mechanism activated in response to cell wall damage. The protein is Cell wall mannoprotein PST1 (PST1) of Saccharomyces cerevisiae (strain YJM789) (Baker's yeast).